The primary structure comprises 412 residues: Gamma-glutamyl phosphate reductase (412 aa).

This sequence belongs to the gamma-glutamyl phosphate reductase family.

The protein resides in the cytoplasm. The catalysed reaction is L-glutamate 5-semialdehyde + phosphate + NADP(+) = L-glutamyl 5-phosphate + NADPH + H(+). The protein operates within amino-acid biosynthesis; L-proline biosynthesis; L-glutamate 5-semialdehyde from L-glutamate: step 2/2. Functionally, catalyzes the NADPH-dependent reduction of L-glutamate 5-phosphate into L-glutamate 5-semialdehyde and phosphate. The product spontaneously undergoes cyclization to form 1-pyrroline-5-carboxylate. The sequence is that of Gamma-glutamyl phosphate reductase from Actinobacillus pleuropneumoniae serotype 5b (strain L20).